A 247-amino-acid polypeptide reads, in one-letter code: MPFSPQELLYEGKAKRIYRTADPRVYLCQYKDDATAFNAQKRGSIAGKGEVNCTVSSHVFAYLAQQGIPNHFLAQTGPTEMQVRALHILPLEVVVRNRTAGSLCKRLGLEQGLPIQPPLVEFYYKNDALGDPLVTPDHIRLLQLATPEQVERLGSLALAINNHLQAFWRSCRLELVDFKLEFGLDEKGEILLADEISPDTCRLWDRGGSEPRVLDKDLFRFDLGDPVAGYQEVLQRVLQAVGSQFLL.

It belongs to the SAICAR synthetase family.

It catalyses the reaction 5-amino-1-(5-phospho-D-ribosyl)imidazole-4-carboxylate + L-aspartate + ATP = (2S)-2-[5-amino-1-(5-phospho-beta-D-ribosyl)imidazole-4-carboxamido]succinate + ADP + phosphate + 2 H(+). It functions in the pathway purine metabolism; IMP biosynthesis via de novo pathway; 5-amino-1-(5-phospho-D-ribosyl)imidazole-4-carboxamide from 5-amino-1-(5-phospho-D-ribosyl)imidazole-4-carboxylate: step 1/2. The protein is Phosphoribosylaminoimidazole-succinocarboxamide synthase of Synechococcus sp. (strain JA-2-3B'a(2-13)) (Cyanobacteria bacterium Yellowstone B-Prime).